A 64-amino-acid chain; its full sequence is Large ribosomal subunit protein bL35 (64 aa).

It belongs to the bacterial ribosomal protein bL35 family.

This Vibrio parahaemolyticus serotype O3:K6 (strain RIMD 2210633) protein is Large ribosomal subunit protein bL35.